The chain runs to 504 residues: Probable cytosol aminopeptidase (504 aa).

Mn(2+) contacts are provided by Lys-263 and Asp-268. Residue Lys-275 is part of the active site. Mn(2+) is bound by residues Asp-286, Asp-345, and Glu-347. The active site involves Arg-349.

This sequence belongs to the peptidase M17 family. Mn(2+) is required as a cofactor.

It is found in the cytoplasm. The catalysed reaction is Release of an N-terminal amino acid, Xaa-|-Yaa-, in which Xaa is preferably Leu, but may be other amino acids including Pro although not Arg or Lys, and Yaa may be Pro. Amino acid amides and methyl esters are also readily hydrolyzed, but rates on arylamides are exceedingly low.. It catalyses the reaction Release of an N-terminal amino acid, preferentially leucine, but not glutamic or aspartic acids.. Its function is as follows. Presumably involved in the processing and regular turnover of intracellular proteins. Catalyzes the removal of unsubstituted N-terminal amino acids from various peptides. In Sulfurihydrogenibium sp. (strain YO3AOP1), this protein is Probable cytosol aminopeptidase.